We begin with the raw amino-acid sequence, 299 residues long: Acetylglutamate kinase (299 aa).

Residues 64–65 (GG), arginine 86, and asparagine 197 each bind substrate.

It belongs to the acetylglutamate kinase family. ArgB subfamily.

The protein localises to the cytoplasm. The enzyme catalyses N-acetyl-L-glutamate + ATP = N-acetyl-L-glutamyl 5-phosphate + ADP. Its pathway is amino-acid biosynthesis; L-arginine biosynthesis; N(2)-acetyl-L-ornithine from L-glutamate: step 2/4. Catalyzes the ATP-dependent phosphorylation of N-acetyl-L-glutamate. This is Acetylglutamate kinase from Persephonella marina (strain DSM 14350 / EX-H1).